Consider the following 259-residue polypeptide: Complement factor D (259 aa).

A signal peptide spans 1-21 (MADRSGHLAALILLGAAVCVA). Residues 22 to 26 (QPRGR) constitute a propeptide, activation peptide. The region spanning 27-254 (ILGGQEAKSH…YVAWIDGVMA (228 aa)) is the Peptidase S1 domain. Cys52 and Cys68 are joined by a disulfide. Active-site charge relay system residues include His67 and Asp115. Intrachain disulfides connect Cys149/Cys215, Cys180/Cys196, and Cys205/Cys230. Residue Ser209 is the Charge relay system of the active site. The self-inhibitor loop stretch occupies residues 224–228 (TSGSR).

The protein belongs to the peptidase S1 family. In terms of processing, CFD is activated by the removal of 5 residues at the N-terminus, named activation peptide, by the MASP-3 isoform of MASP1.

The protein localises to the secreted. The catalysed reaction is Selective cleavage of Arg-|-Lys bond in complement factor B when in complex with complement subcomponent C3b or with cobra venom factor.. Circulates in plasma in a mature but self-inhibited form. Activated by factor B (CFB), which displaces the self-inhibition loop. Associates with CFB complexed with complement C3b. Serine protease that initiates the alternative pathway of the complement system, a cascade of proteins that leads to phagocytosis and breakdown of pathogens and signaling that strengthens the adaptive immune system. In contrast to other complement pathways (classical, lectin and GZMK) that are directly activated by pathogens or antigen-antibody complexes, the alternative complement pathway is initiated by the spontaneous hydrolysis of complement C3. The alternative complement pathway acts as an amplification loop that enhances complement activation by mediating the formation of C3 and C5 convertases. Activated CFD cleaves factor B (CFB) when the latter is complexed with complement C3b, activating the C3 convertase of the alternative pathway. This Sus scrofa (Pig) protein is Complement factor D (CFD).